The following is a 341-amino-acid chain: Basic membrane protein B (341 aa).

An N-terminal signal peptide occupies residues 1-14; it reads MRIVIFILGILLTS. Cysteine 15 carries N-palmitoyl cysteine lipidation. The S-diacylglycerol cysteine moiety is linked to residue cysteine 15.

Belongs to the BMP lipoprotein family. In terms of assembly, monomer.

The protein resides in the cell inner membrane. In terms of biological role, may be part of an ABC-type nucleoside uptake system involved in the purine salvage pathway. In Borrelia garinii subsp. bavariensis (strain ATCC BAA-2496 / DSM 23469 / PBi) (Borreliella bavariensis), this protein is Basic membrane protein B (bmpB).